We begin with the raw amino-acid sequence, 172 residues long: Translation initiation factor IF-3 (172 aa).

The protein belongs to the IF-3 family. Monomer.

The protein localises to the cytoplasm. In terms of biological role, IF-3 binds to the 30S ribosomal subunit and shifts the equilibrium between 70S ribosomes and their 50S and 30S subunits in favor of the free subunits, thus enhancing the availability of 30S subunits on which protein synthesis initiation begins. The sequence is that of Translation initiation factor IF-3 from Campylobacter jejuni subsp. jejuni serotype O:6 (strain 81116 / NCTC 11828).